The primary structure comprises 504 residues: Alpha,alpha-trehalose-phosphate synthase [UDP-forming] (504 aa).

D-glucose 6-phosphate is bound by residues Y97 and D151. The UDP site is built by R287 and K292. UDP-alpha-D-glucose contacts are provided by R287 and K292. R325 contacts D-glucose 6-phosphate. Residue 386 to 394 (DGMNLVSYE) participates in UDP-alpha-D-glucose binding. Position 390 to 394 (390 to 394 (LVSYE)) interacts with UDP. The tract at residues 482-504 (AGKLPTKETPVNGETSKLETSSQ) is disordered. The span at 493-504 (NGETSKLETSSQ) shows a compositional bias: polar residues.

The protein belongs to the glycosyltransferase 20 family.

The catalysed reaction is D-glucose 6-phosphate + UDP-alpha-D-glucose = alpha,alpha-trehalose 6-phosphate + UDP + H(+). It functions in the pathway carbohydrate biosynthesis. Its function is as follows. Synthase catalytic subunit of the trehalose synthase complex that catalyzes the production of trehalose from glucose-6-phosphate and UDP-alpha-D-glucose in a two step process. This is Alpha,alpha-trehalose-phosphate synthase [UDP-forming] (tpsA) from Emericella nidulans (strain FGSC A4 / ATCC 38163 / CBS 112.46 / NRRL 194 / M139) (Aspergillus nidulans).